The primary structure comprises 188 residues: CASP-like protein 4B1 (188 aa).

The disordered stretch occupies residues 1-34 (MTNPDNMKPVEATDVESAAEKTSEPTPASGTSTI). The Cytoplasmic segment spans residues 1 to 46 (MTNPDNMKPVEATDVESAAEKTSEPTPASGTSTITQRWKREDLIKK). Polar residues predominate over residues 24-34 (EPTPASGTSTI). The chain crosses the membrane as a helical span at residues 47–67 (ASPITRGICLLFSLIAFLIMV). The Extracellular portion of the chain corresponds to 68–84 (SNKHGYGRNFNDYEEYR). The helical transmembrane segment at 85–105 (YVLAISIISTLYTAWQTFAHF) threads the bilayer. Over 106–124 (SKREIFDRRTSILVDFSGD) the chain is Cytoplasmic. Residues 125-145 (QIVAYLLISAASSAIPLTNIF) traverse the membrane as a helical segment. The Extracellular segment spans residues 146–156 (REGQDNIFTDS). A helical transmembrane segment spans residues 157–177 (AASAISMAIFAFIALALSALF). Over 178–188 (SGYKLSTHSFI) the chain is Cytoplasmic.

It belongs to the Casparian strip membrane proteins (CASP) family. In terms of assembly, homodimer and heterodimers.

Its subcellular location is the cell membrane. The polypeptide is CASP-like protein 4B1 (Arabidopsis thaliana (Mouse-ear cress)).